The chain runs to 147 residues: MASHRLLLLCLAGLVFVSEAGPTGTGESKCPLMVKVLDAVRGSPAINVAVHVFRKAADDTWEPFASGKTSESGELHGLTTEEEFVEGIYKVEIDTKSYWKALGISPFHEHAEVVFTANDSGPRRYTIAALLSPYSYSTTAVVTNPKE.

The first 20 residues, 1-20, serve as a signal peptide directing secretion; it reads MASHRLLLLCLAGLVFVSEA. At Cys30 the chain carries Sulfocysteine. Lys35 provides a ligand contact to L-thyroxine. At Glu62 the chain carries 4-carboxyglutamate; in a patient with Moyamoya disease. The residue at position 72 (Ser72) is a Phosphoserine. Glu74 provides a ligand contact to L-thyroxine. A glycan (N-linked (GlcNAc...) asparagine) is linked at Asn118. An L-thyroxine-binding site is contributed by Ser137.

Belongs to the transthyretin family. In terms of assembly, homotetramer. Dimer of dimers. In the homotetramer, subunits assemble around a central channel that can accommodate two ligand molecules. Interacts with RBP4. Not glycosylated under normal conditions. Following unfolding, caused for example by variant AMYLD1 'Gly-38', the cryptic Asn-118 site is exposed and glycosylated by STT3B-containing OST complex, leading to its degradation by the ER-associated degradation (ERAD) pathway. Post-translationally, sulfonation of the reactive cysteine Cys-30 enhances the stability of the native conformation of TTR, avoiding misassembly of the protein leading to amyloid formation. Detected in serum and cerebrospinal fluid (at protein level). Highly expressed in choroid plexus epithelial cells. Detected in retina pigment epithelium and liver.

Its subcellular location is the secreted. The protein localises to the cytoplasm. Its function is as follows. Thyroid hormone-binding protein. Probably transports thyroxine from the bloodstream to the brain. The chain is Transthyretin (TTR) from Homo sapiens (Human).